The chain runs to 461 residues: Ornithine decarboxylase (461 aa).

The residue at position 69 (lysine 69) is an N6-(pyridoxal phosphate)lysine. Residues serine 200, glycine 237, and 274-277 (EPGR) contribute to the pyridoxal 5'-phosphate site. At serine 303 the chain carries Phosphoserine; by CK2. Position 331–332 (331–332 (YD)) interacts with substrate. Residue cysteine 360 is the Proton donor; shared with dimeric partner of the active site. Cysteine 360 is subject to S-nitrosocysteine. Aspartate 361 is a substrate binding site. Residue tyrosine 389 participates in pyridoxal 5'-phosphate binding.

This sequence belongs to the Orn/Lys/Arg decarboxylase class-II family. In terms of assembly, homodimer. Only the dimer is catalytically active, as the active sites are constructed of residues from both monomers. The cofactor is pyridoxal 5'-phosphate.

It carries out the reaction L-ornithine + H(+) = putrescine + CO2. It participates in amine and polyamine biosynthesis; putrescine biosynthesis via L-ornithine pathway; putrescine from L-ornithine: step 1/1. With respect to regulation, inhibited by antizymes (AZs) OAZ1, OAZ2 and OAZ3 in response to polyamine levels. AZs inhibit the assembly of the functional homodimer by binding to ODC monomers. Additionally, OAZ1 targets ODC monomers for ubiquitin-independent proteolytic destruction by the 26S proteasome. In terms of biological role, catalyzes the first and rate-limiting step of polyamine biosynthesis that converts ornithine into putrescine, which is the precursor for the polyamines, spermidine and spermine. Polyamines are essential for cell proliferation and are implicated in cellular processes, ranging from DNA replication to apoptosis. The protein is Ornithine decarboxylase (Odc1) of Rattus norvegicus (Rat).